The primary structure comprises 324 residues: MNSLVALVLLGQIIGSTLSFQLGPNMDCNTKGTKDWADIGVRYINEHKLDGYKNALNIIKIFRLLPSDGRSVIVHFKLNLLETKCHVLDPTPVENCAVRQQHNHAVEMDCNVRIIHDIATFEDEVFVKCKSTPDSVENVRRNCPKCPILLPPNDPHVVDSVEYVLNKHNEKLSGHVYEVLEISRGQHKYEPEAFYVEFAIVEVNCTAQEARDGHHQCHPYTAGEDHIAFCRATVFRSHASLEKPKDENFESDCVILDVKEGHAHSHLIQQHIEKYSTSPGHNSTDEYVVECPVAFVEKEVPTDMSDHDTPPVKGCPGRVLHFQL.

An N-terminal signal peptide occupies residues 1–19 (MNSLVALVLLGQIIGSTLS). 2 consecutive Cystatin fetuin-A-type domains span residues 21–130 (QLGP…VKCK) and 141–254 (RNCP…SDCV). 6 cysteine pairs are disulfide-bonded: Cys28–Cys315, Cys85–Cys96, Cys110–Cys129, Cys143–Cys146, Cys205–Cys217, and Cys230–Cys253. N-linked (GlcNAc...) asparagine glycosylation occurs at Asn204. Asn282 carries an N-linked (GlcNAc...) asparagine glycan.

Belongs to the fetuin family. As to quaternary structure, homodimer. In terms of tissue distribution, expressed by the liver.

The protein resides in the secreted. Potent inhibitor of hemorrhagic activity but also proteolytic activities. Inhibition occurs by formation of a non-covalent complex between this protein and the proteinases at their metalloproteinase domains. This chain is Antihemorrhagic factor cHLP-A, found in Gloydius brevicauda (Korean slamosa snake).